We begin with the raw amino-acid sequence, 261 residues long: Calbindin (261 aa).

Residue Ala-2 is modified to N-acetylalanine. Positions Ala-2–Gln-7 are interaction with RANBP9. 5 consecutive EF-hand domains span residues Ile-11–Ala-46, Glu-53–Phe-88, Lys-98–Lys-133, Lys-142–Phe-177, and Met-186–Lys-221. Ca(2+) is bound by residues Asp-24, Asp-26, Ser-28, Tyr-30, and Glu-35. Residues Asp-111, Asp-113, Ser-115, Glu-122, Asp-155, Asn-157, Asp-159, Lys-161, Glu-166, Asp-199, Asp-201, Asn-203, Tyr-205, and Glu-210 each coordinate Ca(2+).

Belongs to the calbindin family. As to quaternary structure, interacts with RANBP9. As to expression, expressed in the modiolar nerve root and in bushy neurons in the ventral cochlear nucleus (at protein level).

Its function is as follows. Buffers cytosolic calcium. May stimulate a membrane Ca(2+)-ATPase and a 3',5'-cyclic nucleotide phosphodiesterase. The polypeptide is Calbindin (Calb1) (Mus musculus (Mouse)).